The sequence spans 136 residues: SPbeta prophage-derived uncharacterized protein YonI (136 aa).

The protein is SPbeta prophage-derived uncharacterized protein YonI (yonI) of Bacillus subtilis (strain 168).